Here is a 141-residue protein sequence, read N- to C-terminus: Large ribosomal subunit protein uL11 (141 aa).

This sequence belongs to the universal ribosomal protein uL11 family. As to quaternary structure, part of the ribosomal stalk of the 50S ribosomal subunit. Interacts with L10 and the large rRNA to form the base of the stalk. L10 forms an elongated spine to which L12 dimers bind in a sequential fashion forming a multimeric L10(L12)X complex. Post-translationally, one or more lysine residues are methylated.

Its function is as follows. Forms part of the ribosomal stalk which helps the ribosome interact with GTP-bound translation factors. This Synechococcus sp. (strain JA-2-3B'a(2-13)) (Cyanobacteria bacterium Yellowstone B-Prime) protein is Large ribosomal subunit protein uL11.